A 278-amino-acid polypeptide reads, in one-letter code: 4-deoxy-L-threo-5-hexosulose-uronate ketol-isomerase (278 aa).

Residues histidine 196, histidine 198, glutamate 203, and histidine 245 each contribute to the Zn(2+) site.

Belongs to the KduI family. As to quaternary structure, homohexamer. It depends on Zn(2+) as a cofactor.

It catalyses the reaction 5-dehydro-4-deoxy-D-glucuronate = 3-deoxy-D-glycero-2,5-hexodiulosonate. The protein operates within glycan metabolism; pectin degradation; 2-dehydro-3-deoxy-D-gluconate from pectin: step 4/5. Functionally, catalyzes the isomerization of 5-dehydro-4-deoxy-D-glucuronate to 3-deoxy-D-glycero-2,5-hexodiulosonate. The sequence is that of 4-deoxy-L-threo-5-hexosulose-uronate ketol-isomerase from Escherichia coli O127:H6 (strain E2348/69 / EPEC).